Reading from the N-terminus, the 209-residue chain is Uracil phosphoribosyltransferase (209 aa).

5-phospho-alpha-D-ribose 1-diphosphate-binding positions include R79, R104, and 131 to 139 (DPMLATGVS). Residues I194 and 199 to 201 (GDA) contribute to the uracil site. D200 provides a ligand contact to 5-phospho-alpha-D-ribose 1-diphosphate.

The protein belongs to the UPRTase family. The cofactor is Mg(2+).

The catalysed reaction is UMP + diphosphate = 5-phospho-alpha-D-ribose 1-diphosphate + uracil. The protein operates within pyrimidine metabolism; UMP biosynthesis via salvage pathway; UMP from uracil: step 1/1. Its activity is regulated as follows. Allosterically activated by GTP. Its function is as follows. Catalyzes the conversion of uracil and 5-phospho-alpha-D-ribose 1-diphosphate (PRPP) to UMP and diphosphate. The chain is Uracil phosphoribosyltransferase from Thermotoga neapolitana (strain ATCC 49049 / DSM 4359 / NBRC 107923 / NS-E).